The primary structure comprises 450 residues: Probable ATP-dependent RNA helicase MG425 homolog (450 aa).

The Q motif motif lies at 3 to 31; the sequence is STFNELGVSPALIATLKDNNINQPTTIQQ. The Helicase ATP-binding domain occupies 34–206; the sequence is IPQFLQHQNL…KQITKNGIFL (173 aa). An ATP-binding site is contributed by 47 to 54; the sequence is SPTGTGKT. Positions 154–157 match the DEVD box motif; it reads DEVD. The Helicase C-terminal domain maps to 234–384; sequence RKKQALYSLV…PLRPMRLRLI (151 aa). Residues 429–450 form a disordered region; that stretch reads MRQPERDMQKNKLHDSDWQSNM. Over residues 430–450 the composition is skewed to basic and acidic residues; that stretch reads RQPERDMQKNKLHDSDWQSNM.

This sequence belongs to the DEAD box helicase family.

The catalysed reaction is ATP + H2O = ADP + phosphate + H(+). This is Probable ATP-dependent RNA helicase MG425 homolog from Mycoplasma pneumoniae (strain ATCC 29342 / M129 / Subtype 1) (Mycoplasmoides pneumoniae).